The chain runs to 1134 residues: MSNRDSANPPGFNDAVPLAICYIDSSTSSHDEYLTLLQSKVSAPDKNFRDETVDGAPFLAGDAISKGHRYSPPVRSDRASAQGLLQQHLEKSSTLENLKRYSSTLLGRQNDAVIDEPFAPFRPPPRVTLSESRRDRWLQGLSDPMVPLSSLIKTIPHGLWGEDILRMLVKFRVPFTRAIWFIRCAGVNEARSFLRKVQTTDITEWVKNWTDVAAGFLISFISSFLNADIYSFADDYTYLLKLFGRLLAEELVSPKHFLLRIVSFSGDSSLKSFSLHFFALQFFSTSLIQYTHICRKCVITILQSYQQLIVDQPANLLKFSLLSKKVSHFLFTLAQKNIESFFFPTEWDKLKPTIILLWKDFPNYSTLLSIMQERNSKAMYMYKPVTSSIRFLQIISCLSFPVGWRTLAKDLFKLLPVYTGVPLLLHWCINCRSIFSGDRNFIVSSIFDNANFDRNLIVDLTLSFVLKLHPLEYNECVAAAQLLDHLAACGYFFFSKYIARLASLGYLRESMLNSSFMDDQRKILVQLPILRMSQQLKNKIYYILSKGNYFVDWSICDEYVKRFKEDHFSFMFKKEENYAIITLSLVKIASTPMSKLYEDYLVMLFAFHYSMFQVMTKLIADNLVHFSFQSCACQTLFFICSVVPKTESQKLLLNEMGKLFQVELNFSYDSPDVNLLIEQFYEITSYESNYDDAFVEYKDATVANRKDFIEFLFHNITVSSKHTAVIFTSDLLMVLKIALNHPPYFDDLATTTFSSLLKRDECTILSFFKILQFYGCKLLSVDQIWAVVSDVYEAQDNNTTLKQFFNYLLDESTWPEGYLEERHWRSILCKEARKHDSGLKLFKLGIKLCTRNEQIMKTIWSFIHVHDCNVISEVIPDQRFLRTLTEHFMIDLRQLDIVTCLKKALVTLDEFSAPLYATWLTTLDDDELSELTDDVVQKKVLESLDNYKSGIWKLVLSGLPNCKTVFEHLLLFSLEERLDLPAAFLQDLIGASAYVMEQVPDSWFLEKLPCPLTQSLQSFSHLSNHIEVLDSTRQSRLTFLCHLILHMHGFVELTDQLATLESLTIRKCIYRNQELLDLLLFSIHLVKPNVETNDEVCNTLKAWENIESRPYTIDFPEALQQYSPRIVLYEPTFW.

It belongs to the Mediator complex subunit 12 family. In terms of assembly, component of the srb8-11 complex which consists of rb8, srb9(TRAP240), srb10 and srb11. The srb8-11 complex associates with the Mediator complex thereby blocking association with RNA polymerase II and leading to reduced transcriptional activation by Mediator.

Its subcellular location is the nucleus. Its function is as follows. Component of the srb8-11 complex. The srb8-11 complex is a regulatory module of the Mediator complex which is itself involved in regulation of basal and activated RNA polymerase II-dependent transcription. The srb8-11 complex may be involved in the transcriptional repression of a subset of genes regulated by Mediator. It may inhibit the association of the Mediator complex with RNA polymerase II to form the holoenzyme complex. The chain is Mediator of RNA polymerase II transcription subunit 12 (srb8) from Schizosaccharomyces pombe (strain 972 / ATCC 24843) (Fission yeast).